Consider the following 152-residue polypeptide: Protein SprT-like (152 aa).

One can recognise a SprT-like domain in the interval 7–148; that stretch reads QRLVEEVSLQ…GKCKGKLILI (142 aa). Zn(2+) is bound at residue His67. Residue Glu68 is part of the active site. Residue His71 participates in Zn(2+) binding.

This sequence belongs to the SprT family. Requires Zn(2+) as cofactor.

The protein resides in the cytoplasm. The chain is Protein SprT-like from Bacillus thuringiensis subsp. konkukian (strain 97-27).